Here is a 172-residue protein sequence, read N- to C-terminus: Myosin regulatory light chain RLC-A (172 aa).

A compositionally biased stretch (basic residues) spans 1–16 (MSSKRAKTKTTKKRPQ). A disordered region spans residues 1–20 (MSSKRAKTKTTKKRPQRATS). Phosphothreonine; by MLCK is present on threonine 19. Serine 20 carries the post-translational modification Phosphoserine; by MLCK. 3 consecutive EF-hand domains span residues 29 to 64 (SQIQ…MGKN), 98 to 133 (DPED…MGDR), and 134 to 169 (FTDE…GAKD). Residues aspartate 42, asparagine 44, aspartate 46, and aspartate 53 each contribute to the Ca(2+) site.

As to quaternary structure, myosin is a hexamer of 2 heavy chains and 4 light chains. Post-translationally, phosphorylation increases the actin-activated myosin ATPase activity and thereby regulates the contractile activity.

Myosin regulatory subunit that plays an important role in regulation of both smooth muscle and nonmuscle cell contractile activity via its phosphorylation. Implicated in cytokinesis, receptor capping, and cell locomotion. This chain is Myosin regulatory light chain RLC-A (Rlc-a), found in Rattus norvegicus (Rat).